A 212-amino-acid polypeptide reads, in one-letter code: Abscisic acid receptor PYL10 (212 aa).

An START-like region spans residues 34 to 191; sequence YAVGPGQCSS…NLQKLKSVSE (158 aa). Abscisate-binding positions include Lys-70, 107–112, 134–140, and Glu-156; these read ASTSTE and RLRNYRS. Positions 103 to 107 match the Gate loop motif; the sequence is SGLPA. Residues 133-135 carry the Latch loop motif; the sequence is HRL.

This sequence belongs to the PYR/PYL/RCAR abscisic acid intracellular receptor family. As to quaternary structure, homodimer. Interacts with PP2C53. Binding to PP2C53 is dependent on the presence of abscisic acid (ABA). Interacts with PP2C50. Binding to PP2C50 is dependent on the presence of ABA.

The protein localises to the cytoplasm. It is found in the cytosol. Its subcellular location is the nucleus. In terms of biological role, inhibits the protein phosphatases PP2C06 and PP2C09 when activated by abscisic acid (ABA). Together with PP2C53, SAPK8 and SAPK10, may form an ABA signaling module involved in stress response. This chain is Abscisic acid receptor PYL10, found in Oryza sativa subsp. japonica (Rice).